A 325-amino-acid chain; its full sequence is Serine/threonine-protein phosphatase 2A activator 1 (325 aa).

The protein belongs to the PTPA-type PPIase family.

It localises to the cytoplasm. The protein resides in the nucleus. The catalysed reaction is [protein]-peptidylproline (omega=180) = [protein]-peptidylproline (omega=0). In terms of biological role, PPIases accelerate the folding of proteins. It catalyzes the cis-trans isomerization of proline imidic peptide bonds in oligopeptides. Acts as a regulatory subunit for PP2A-like phosphatases modulating their activity or substrate specificity, probably by inducing a conformational change in the catalytic subunit, a direct target of the PPIase. Can reactivate inactive phosphatase PP2A-phosphatase methylesterase complexes (PP2Ai) in presence of ATP and Mg(2+) by dissociating the inactive form from the complex. The chain is Serine/threonine-protein phosphatase 2A activator 1 (rrd1) from Schizosaccharomyces pombe (strain 972 / ATCC 24843) (Fission yeast).